The chain runs to 92 residues: MANHSSAKKAARQTVKRTLINKKRSSAIKTFIKKVVHEISLGNKENANIALSVAQSKIMQGVKKNIIKLNTASRKISRLSRQIKSLKVNNTL.

The protein belongs to the bacterial ribosomal protein bS20 family.

In terms of biological role, binds directly to 16S ribosomal RNA. In Rickettsia africae (strain ESF-5), this protein is Small ribosomal subunit protein bS20.